The chain runs to 104 residues: BLOC-1-related complex subunit 7 (104 aa).

The protein belongs to the BORCS7 family.

Its subcellular location is the lysosome membrane. In terms of biological role, as part of a BORC-like complex may play a role in lysosomes movement and localization at the cell periphery. Associated with the cytosolic face of lysosomes, this complex may couple lysosomes to microtubule plus-end-directed kinesin motor. The chain is BLOC-1-related complex subunit 7 from Xenopus tropicalis (Western clawed frog).